A 117-amino-acid chain; its full sequence is Peptidyl-tRNA hydrolase (117 aa).

Belongs to the PTH2 family.

It localises to the cytoplasm. It catalyses the reaction an N-acyl-L-alpha-aminoacyl-tRNA + H2O = an N-acyl-L-amino acid + a tRNA + H(+). Its function is as follows. The natural substrate for this enzyme may be peptidyl-tRNAs which drop off the ribosome during protein synthesis. The polypeptide is Peptidyl-tRNA hydrolase (Thermoplasma acidophilum (strain ATCC 25905 / DSM 1728 / JCM 9062 / NBRC 15155 / AMRC-C165)).